The primary structure comprises 219 residues: Probable nicotinate-nucleotide adenylyltransferase (219 aa).

This sequence belongs to the NadD family.

The enzyme catalyses nicotinate beta-D-ribonucleotide + ATP + H(+) = deamido-NAD(+) + diphosphate. Its pathway is cofactor biosynthesis; NAD(+) biosynthesis; deamido-NAD(+) from nicotinate D-ribonucleotide: step 1/1. Its function is as follows. Catalyzes the reversible adenylation of nicotinate mononucleotide (NaMN) to nicotinic acid adenine dinucleotide (NaAD). This Pseudoalteromonas atlantica (strain T6c / ATCC BAA-1087) protein is Probable nicotinate-nucleotide adenylyltransferase.